The chain runs to 178 residues: Deoxycytidylate deaminase (178 aa).

The region spanning 14 to 146 is the CMP/dCMP-type deaminase domain; sequence EWPEYFMAVA…EATAARLLFD (133 aa). Histidine 84 is a binding site for Zn(2+). The Proton donor role is filled by glutamate 86. Zn(2+) contacts are provided by cysteine 110 and cysteine 113. Serine 174 carries the post-translational modification Phosphoserine.

It belongs to the cytidine and deoxycytidylate deaminase family. As to quaternary structure, homohexamer. Zn(2+) is required as a cofactor.

The enzyme catalyses dCMP + H2O + H(+) = dUMP + NH4(+). The catalysed reaction is 5-hydroxymethyl-dCMP + H2O + H(+) = 5-hydroxymethyl-dUMP + NH4(+). Allosteric enzyme whose activity is greatly influenced by the end products of its metabolic pathway, dCTP and dTTP. Functionally, catalyzes the deamination of dCMP to dUMP, providing the nucleoside monophosphate substrate for the thymidylate synthase/TYMS. Also, part of a nucleotide salvage pathway that eliminates epigenetically modified 5-hydroxymethyl-dCMP (hmdCMP) in a two-step process entailing deamination to cytotoxic 5-hydroxymethyl-dUMP (hmdUMP), followed by its hydrolysis into 5-hydroxymethyluracil (hmU) and 2-deoxy-D-ribose 5-phosphate (deoxyribosephosphate). Catalyzes the first step in that pathway, the deamination of 5-hydroxymethyl-dCMP (hmdCMP). This Pongo abelii (Sumatran orangutan) protein is Deoxycytidylate deaminase.